We begin with the raw amino-acid sequence, 273 residues long: Structural protein ORF273 (273 aa).

It localises to the virion. In Acidianus convivator (ATV), this protein is Structural protein ORF273.